The primary structure comprises 541 residues: Chaperonin GroEL 2 (541 aa).

ATP contacts are provided by residues 29 to 32 (TLGP), 86 to 90 (DGTTT), glycine 413, 476 to 478 (NAA), and aspartate 492.

Belongs to the chaperonin (HSP60) family. As to quaternary structure, forms a cylinder of 14 subunits composed of two heptameric rings stacked back-to-back. Interacts with the co-chaperonin GroES.

The protein localises to the secreted. The protein resides in the capsule. Its subcellular location is the cell surface. It is found in the cell wall. It catalyses the reaction ATP + H2O + a folded polypeptide = ADP + phosphate + an unfolded polypeptide.. Functionally, together with its co-chaperonin GroES, plays an essential role in assisting protein folding. The GroEL-GroES system forms a nano-cage that allows encapsulation of the non-native substrate proteins and provides a physical environment optimized to promote and accelerate protein folding. This Mycolicibacterium paratuberculosis (strain ATCC BAA-968 / K-10) (Mycobacterium paratuberculosis) protein is Chaperonin GroEL 2.